Reading from the N-terminus, the 303-residue chain is UDP-3-O-acyl-N-acetylglucosamine deacetylase (303 aa).

The Zn(2+) site is built by H78, H237, and D241. H264 (proton donor) is an active-site residue.

It belongs to the LpxC family. Requires Zn(2+) as cofactor.

The enzyme catalyses a UDP-3-O-[(3R)-3-hydroxyacyl]-N-acetyl-alpha-D-glucosamine + H2O = a UDP-3-O-[(3R)-3-hydroxyacyl]-alpha-D-glucosamine + acetate. The protein operates within glycolipid biosynthesis; lipid IV(A) biosynthesis; lipid IV(A) from (3R)-3-hydroxytetradecanoyl-[acyl-carrier-protein] and UDP-N-acetyl-alpha-D-glucosamine: step 2/6. In terms of biological role, catalyzes the hydrolysis of UDP-3-O-myristoyl-N-acetylglucosamine to form UDP-3-O-myristoylglucosamine and acetate, the committed step in lipid A biosynthesis. In Azotobacter vinelandii (strain DJ / ATCC BAA-1303), this protein is UDP-3-O-acyl-N-acetylglucosamine deacetylase.